A 418-amino-acid polypeptide reads, in one-letter code: Serine hydroxymethyltransferase (418 aa).

(6S)-5,6,7,8-tetrahydrofolate-binding positions include leucine 117 and 121 to 123; that span reads GHL. Residue lysine 225 is modified to N6-(pyridoxal phosphate)lysine.

The protein belongs to the SHMT family. Homodimer. Pyridoxal 5'-phosphate serves as cofactor.

The protein localises to the cytoplasm. The enzyme catalyses (6R)-5,10-methylene-5,6,7,8-tetrahydrofolate + glycine + H2O = (6S)-5,6,7,8-tetrahydrofolate + L-serine. The protein operates within one-carbon metabolism; tetrahydrofolate interconversion. It functions in the pathway amino-acid biosynthesis; glycine biosynthesis; glycine from L-serine: step 1/1. Catalyzes the reversible interconversion of serine and glycine with tetrahydrofolate (THF) serving as the one-carbon carrier. This reaction serves as the major source of one-carbon groups required for the biosynthesis of purines, thymidylate, methionine, and other important biomolecules. Also exhibits THF-independent aldolase activity toward beta-hydroxyamino acids, producing glycine and aldehydes, via a retro-aldol mechanism. This chain is Serine hydroxymethyltransferase, found in Mycoplasma mobile (strain ATCC 43663 / 163K / NCTC 11711) (Mesomycoplasma mobile).